Consider the following 227-residue polypeptide: Protein FAM3C (227 aa).

Residues 1–24 (MRVAGAAKLVVAVAVFLLTFYVIS) form the signal peptide. 2 disulfide bridges follow: cysteine 58–cysteine 86 and cysteine 64–cysteine 221. The 159-residue stretch at 67–225 (KHFAFKMASG…VEMEGCIPQK (159 aa)) folds into the GG-type lectin domain.

It belongs to the FAM3 family. In terms of tissue distribution, present in most secretory epithelia (at protein level).

It localises to the secreted. The protein localises to the cytoplasmic vesicle. Its function is as follows. May be involved in retinal laminar formation. Promotes epithelial to mesenchymal transition. This Homo sapiens (Human) protein is Protein FAM3C (FAM3C).